Reading from the N-terminus, the 253-residue chain is Exosome complex component Rrp4 (253 aa).

An S1 motif domain is found at 80-153 (GDIVIGIVVD…SRGPILTVQD (74 aa)).

It belongs to the RRP4 family. As to quaternary structure, component of the archaeal exosome complex. Forms a trimer of Rrp4 and/or Csl4 subunits. The trimer associates with a hexameric ring-like arrangement composed of 3 Rrp41-Rrp42 heterodimers.

It localises to the cytoplasm. In terms of biological role, non-catalytic component of the exosome, which is a complex involved in RNA degradation. Increases the RNA binding and the efficiency of RNA degradation. Confers strong poly(A) specificity to the exosome. This Ignisphaera aggregans (strain DSM 17230 / JCM 13409 / AQ1.S1) protein is Exosome complex component Rrp4.